Consider the following 198-residue polypeptide: Nucleoplasmin (198 aa).

The acidic tract A1 stretch occupies residues 35-38 (SDED). The span at 125-145 (SWAEEEGEEEVEEEEEEEDPE) shows a compositional bias: acidic residues. The disordered stretch occupies residues 125–198 (SWAEEEGEEE…GRGRKPAAKK (74 aa)). Residues 128–145 (EEEGEEEVEEEEEEEDPE) are acidic tract A2. Residues 150–167 (AVKRPAASKKGSQAKKKK) are compositionally biased toward basic residues. The short motif at 152–167 (KRPAASKKGSQAKKKK) is the Bipartite nuclear localization signal element. Residues 172-174 (EEE) are acidic tract A3. Positions 183–198 (KKGKGAGRGRKPAAKK) are enriched in basic residues.

It belongs to the nucleoplasmin family. Homopentamer. In terms of tissue distribution, expressed in oocytes.

It is found in the nucleus. Its function is as follows. Acts as a chaperone for histones, such as histone H2A-H2B, and thus regulates the assembly of nucleosome cores. Involved in chromatin remodeling, especially during fertilization and early embryonic development. May be involved in sperm chromatin decondensation during fertilization. The protein is Nucleoplasmin of Rhinella marina (Cane toad).